The chain runs to 468 residues: Citrate synthase, mitochondrial (468 aa).

Residues 1–30 constitute a mitochondrion transit peptide; that stretch reads MSFLSISRLAPRLLSSKNAACVVVAARNAS. Active-site residues include His-303 and His-349. Arg-358 is an oxaloacetate binding site. The active site involves Asp-404. Oxaloacetate is bound by residues Arg-430 and Arg-450.

This sequence belongs to the citrate synthase family. As to quaternary structure, homodimer.

It localises to the mitochondrion matrix. It catalyses the reaction oxaloacetate + acetyl-CoA + H2O = citrate + CoA + H(+). It participates in carbohydrate metabolism; tricarboxylic acid cycle; isocitrate from oxaloacetate: step 1/2. Functionally, key enzyme of the Krebs tricarboxylic acid cycle which catalyzes the synthesis of citrate from acetyl coenzyme A and oxaloacetate. The polypeptide is Citrate synthase, mitochondrial (cs) (Danio rerio (Zebrafish)).